A 300-amino-acid polypeptide reads, in one-letter code: E3 ubiquitin-protein ligase RNF212B (300 aa).

An RING-type zinc finger spans residues 6–40; that stretch reads CNQCFRKDGAHFFVTSCGHIFCKKCVTLEKCAVCG. Residues 87–124 are a coiled coil; sequence LLIAFYKHRITKLETAMQEAQQALVSQDKELSVLRKEN. A disordered region spans residues 141 to 232; sequence YQGSRSITPR…SYRTSSASSG (92 aa). Polar residues predominate over residues 155-165; it reads TSPSQSVTPRP. Positions 166-182 are enriched in low complexity; it reads SFQHSSQVVSRSSSAES. Residues 191–200 show a composition bias toward gly residues; sequence GSLGQGGRGL. Polar residues predominate over residues 211–232; that stretch reads NETPSPASTHSLSYRTSSASSG.

In terms of assembly, homodimer. In terms of processing, autoubiquitinated.

The protein resides in the chromosome. It carries out the reaction S-ubiquitinyl-[E2 ubiquitin-conjugating enzyme]-L-cysteine + [acceptor protein]-L-lysine = [E2 ubiquitin-conjugating enzyme]-L-cysteine + N(6)-ubiquitinyl-[acceptor protein]-L-lysine.. Its pathway is protein modification; protein ubiquitination. Its function is as follows. Ubiquitin E3 ligase that acts as a crucial factor for crossing-over (CO) formation during meiosis. Essential for normal prophase I progression and for ensuring appropriate CO designation in meiosis. Recruits key components of the cross-over machinery either directly ou indirectly, leading to the activation of the MutL-gamma complex. The function of RNF212B in CO designation is dependent on its catalytic activity. The sequence is that of E3 ubiquitin-protein ligase RNF212B (RNF212B) from Homo sapiens (Human).